A 238-amino-acid chain; its full sequence is HTH-type transcriptional regulator TreR (238 aa).

Positions 1 to 71 (MKVNKFITIY…RGKGSVVLNR (71 aa)) constitute an HTH gntR-type domain. The segment at residues 31–50 (EHELTAQYGTSRETVRKALH) is a DNA-binding region (H-T-H motif).

As to quaternary structure, dimer of dimers.

In terms of biological role, repressor for the trePA operon. It is able to bind trehalose-6-phosphate. This Bacillus subtilis (strain 168) protein is HTH-type transcriptional regulator TreR (treR).